Here is a 61-residue protein sequence, read N- to C-terminus: Large ribosomal subunit protein bL32 (61 aa).

The span at 1–16 (MAVPKRKTSPSKRGMR) shows a compositional bias: basic residues. The disordered stretch occupies residues 1 to 41 (MAVPKRKTSPSKRGMRRSADALKASTYVEDKNSGELRRPHH). Residues 28–41 (VEDKNSGELRRPHH) show a composition bias toward basic and acidic residues.

It belongs to the bacterial ribosomal protein bL32 family.

The sequence is that of Large ribosomal subunit protein bL32 from Rhizobium rhizogenes (strain K84 / ATCC BAA-868) (Agrobacterium radiobacter).